Here is a 377-residue protein sequence, read N- to C-terminus: Chorismate synthase (377 aa).

Arg47 provides a ligand contact to NADP(+). Residues 124–126, 252–253, Gly296, 311–315, and Arg338 contribute to the FMN site; these read RSS, NS, and KPTPS.

Belongs to the chorismate synthase family. Requires FMNH2 as cofactor.

It carries out the reaction 5-O-(1-carboxyvinyl)-3-phosphoshikimate = chorismate + phosphate. It functions in the pathway metabolic intermediate biosynthesis; chorismate biosynthesis; chorismate from D-erythrose 4-phosphate and phosphoenolpyruvate: step 7/7. Its function is as follows. Catalyzes the anti-1,4-elimination of the C-3 phosphate and the C-6 proR hydrogen from 5-enolpyruvylshikimate-3-phosphate (EPSP) to yield chorismate, which is the branch point compound that serves as the starting substrate for the three terminal pathways of aromatic amino acid biosynthesis. This reaction introduces a second double bond into the aromatic ring system. The protein is Chorismate synthase of Methanococcus vannielii (strain ATCC 35089 / DSM 1224 / JCM 13029 / OCM 148 / SB).